Reading from the N-terminus, the 82-residue chain is Small ribosomal subunit protein bS18 (82 aa).

Belongs to the bacterial ribosomal protein bS18 family. As to quaternary structure, part of the 30S ribosomal subunit. Forms a tight heterodimer with protein bS6.

Binds as a heterodimer with protein bS6 to the central domain of the 16S rRNA, where it helps stabilize the platform of the 30S subunit. This chain is Small ribosomal subunit protein bS18, found in Bartonella bacilliformis (strain ATCC 35685 / KC583 / Herrer 020/F12,63).